The sequence spans 358 residues: Trace amine-associated receptor 7b (358 aa).

At 1–47 (MATDNDSFPWDQDSILSSDMFSATSTELCYENLNRSCVRSPYSPGPR) the chain is on the extracellular side. N-linked (GlcNAc...) asparagine glycosylation is found at Asn-5 and Asn-34. Intrachain disulfides connect Cys-37–Cys-201 and Cys-120–Cys-205. A helical transmembrane segment spans residues 48-68 (LILYAVFGFGAALAVCGNLLV). Over 69–83 (MTSILHFRQLHSPAN) the chain is Cytoplasmic. A helical membrane pass occupies residues 84-104 (FLVVSLACADFLVGLTVMPFS). The Extracellular segment spans residues 105 to 121 (TVRSVEGCWYFGESYCK). The helical transmembrane segment at 122–143 (LHTCFDVSFCYCSIFHLCFISV) threads the bilayer. At 144 to 166 (DRYIAVSDPLTYPTRFTAFVSGK) the chain is on the cytoplasmic side. A helical transmembrane segment spans residues 167–187 (CITFSWLLSTIYGFSLLYTGA). Residues 188 to 212 (NEAGLEDLVSALTCVGGCQLAVNQS) lie on the Extracellular side of the membrane. Asn-210 carries an N-linked (GlcNAc...) asparagine glycan. Residues 213–233 (WVFINFLLFLIPTLVMITVYS) traverse the membrane as a helical segment. The Cytoplasmic segment spans residues 234–274 (KIFLIAKQQAQNIEKMSKQTARASDSYKDRVAKRERKAAKT). Residues 275-295 (LGIAVAAFLLSWLPYFIDSII) traverse the membrane as a helical segment. Residues 296–309 (DAFLGFITPTYVYE) are Extracellular-facing. Residues 310-333 (ILVWIAYYNSAMNPLIYAFFYPWF) form a helical membrane-spanning segment. At 334–358 (RKAIKLIVSGKVLRENSSTTNLFPE) the chain is on the cytoplasmic side.

This sequence belongs to the G-protein coupled receptor 1 family. As to expression, specifically expressed in neurons of the olfactory epithelium.

It localises to the cell membrane. In terms of biological role, olfactory receptor specific for N,N-dimethylalkylamines trace amines, such as N,N-dimethylcyclohexylamine. Trace amine compounds are enriched in animal body fluids and act on trace amine-associated receptors (TAARs) to elicit both intraspecific and interspecific innate behaviors. Ligand-binding causes a conformation change that triggers signaling via G(s)-class of G alpha proteins (GNAL or GNAS). This chain is Trace amine-associated receptor 7b, found in Mus musculus (Mouse).